The sequence spans 280 residues: Ribosomal RNA small subunit methyltransferase A (280 aa).

His-13, Leu-15, Gly-40, Glu-61, Asp-85, and Asn-106 together coordinate S-adenosyl-L-methionine. Residues Arg-258–Gln-280 are disordered.

This sequence belongs to the class I-like SAM-binding methyltransferase superfamily. rRNA adenine N(6)-methyltransferase family. RsmA subfamily.

It localises to the cytoplasm. The catalysed reaction is adenosine(1518)/adenosine(1519) in 16S rRNA + 4 S-adenosyl-L-methionine = N(6)-dimethyladenosine(1518)/N(6)-dimethyladenosine(1519) in 16S rRNA + 4 S-adenosyl-L-homocysteine + 4 H(+). Specifically dimethylates two adjacent adenosines (A1518 and A1519) in the loop of a conserved hairpin near the 3'-end of 16S rRNA in the 30S particle. May play a critical role in biogenesis of 30S subunits. This chain is Ribosomal RNA small subunit methyltransferase A, found in Alcanivorax borkumensis (strain ATCC 700651 / DSM 11573 / NCIMB 13689 / SK2).